The following is a 132-amino-acid chain: MQRVTLTLDDDLLAALDALSARRGYHNRSEAVRDILRDALNQDPPSPESRRGYAVLSYVYEHEKRELASRLVATQHHHHDLSVATLHVHISHDDCLEIAVLKGDMAEVQHFADDVIAQRGVRHGHLQCLADD.

4 residues coordinate Ni(2+): His76, His87, His89, and Cys95.

It belongs to the transcriptional regulatory CopG/NikR family. Homotetramer. The cofactor is Ni(2+).

In terms of biological role, transcriptional repressor of the nikABCDE operon. Is active in the presence of excessive concentrations of intracellular nickel. The chain is Nickel-responsive regulator from Klebsiella pneumoniae subsp. pneumoniae (strain ATCC 700721 / MGH 78578).